The primary structure comprises 393 residues: S-adenosylmethionine synthase (393 aa).

Position 16 (His-16) interacts with ATP. Asp-18 lines the Mg(2+) pocket. Glu-44 contacts K(+). Glu-57 and Gln-100 together coordinate L-methionine. The flexible loop stretch occupies residues 100 to 110; it reads QSNDIAQGVDH. ATP-binding positions include 167–169, 238–239, Asp-247, 253–254, Ala-270, and Lys-274; these read DAK, RF, and RK. Asp-247 contributes to the L-methionine binding site. Lys-278 contributes to the L-methionine binding site.

This sequence belongs to the AdoMet synthase family. As to quaternary structure, homotetramer; dimer of dimers. Mg(2+) is required as a cofactor. K(+) serves as cofactor.

The protein resides in the cytoplasm. The enzyme catalyses L-methionine + ATP + H2O = S-adenosyl-L-methionine + phosphate + diphosphate. Its pathway is amino-acid biosynthesis; S-adenosyl-L-methionine biosynthesis; S-adenosyl-L-methionine from L-methionine: step 1/1. Catalyzes the formation of S-adenosylmethionine (AdoMet) from methionine and ATP. The overall synthetic reaction is composed of two sequential steps, AdoMet formation and the subsequent tripolyphosphate hydrolysis which occurs prior to release of AdoMet from the enzyme. The sequence is that of S-adenosylmethionine synthase from Albidiferax ferrireducens (strain ATCC BAA-621 / DSM 15236 / T118) (Rhodoferax ferrireducens).